Here is a 482-residue protein sequence, read N- to C-terminus: MAAARVLRTWSQNAVRLTCVRYFQTFNSARVLKPKCVCSVGYPLFKYSQPRHSLRTAAVLQGQVVQFKLSDIGEGIREVTIKEWYVKEGDTVSQFDSICEVQSDKASVTITSRYDGVIKRLYYNLDDIAYVGKPLIDIETEALKDSEEDVVETPAVSHDEHTHQEIKGQKTLATPAVRRLAMENNIKLSEVVGSGKDGRILKEDILSFLEKQTGAILPPSPKSEITPPPPQPKDRTFPTPIAKPPVFTGKDRTEPVTGFQKAMVKTMSAALKIPHFGYCDEIDLTQLVKLREELKPVALARGIKLSFMPFFLKAASLGLLQFPILNASVDENCQNITYKASHNIGIAMDTELGLIVPNVKNVQVRSVFEIAMELNRLQKLGSSGQLGTTDLTGGTFTLSNIGSIGGTYAKPVILPPEVAIGALGAIKALPRFDQKGDVYKAQIMNVSWSADHRVIDGATMSRFSNLWKSYLENPAFMLLDLK.

The transit peptide at 1–61 (MAAARVLRTW…HSLRTAAVLQ (61 aa)) directs the protein to the mitochondrion. The 76-residue stretch at 64–139 (VVQFKLSDIG…YVGKPLIDIE (76 aa)) folds into the Lipoyl-binding domain. Lysine 105 is modified (N6-lipoyllysine). Lysine 133 is subject to N6-succinyllysine. Residues 145-160 (DSEEDVVETPAVSHDE) form a critical for association with PPM1K region. The region spanning 172-209 (LATPAVRRLAMENNIKLSEVVGSGKDGRILKEDILSFL) is the Peripheral subunit-binding (PSBD) domain. The residue at position 196 (lysine 196) is an N6-acetyllysine; alternate. Position 196 is an N6-succinyllysine; alternate (lysine 196). Lysine 202 carries the N6-acetyllysine modification. Positions 217 to 252 (LPPSPKSEITPPPPQPKDRTFPTPIAKPPVFTGKDR) are disordered. Residues 218–231 (PPSPKSEITPPPPQ) show a composition bias toward pro residues. Serine 220 bears the Phosphoserine mark. N6-acetyllysine occurs at positions 243 and 250. Lysine 261 is subject to N6-succinyllysine. Lysine 289 is modified (N6-acetyllysine; alternate). Lysine 289 is modified (N6-succinyllysine; alternate). Arginine 291 contributes to the CoA binding site. Residues lysine 295 and lysine 304 each carry the N6-acetyllysine modification. Serine 306, aspartate 349, glutamine 378, serine 399, asparagine 400, serine 403, glycine 424, and isoleucine 426 together coordinate CoA. Lysine 435 carries the post-translational modification N6-acetyllysine. Residue lysine 440 is modified to N6-acetyllysine; alternate. Lysine 440 is modified (N6-succinyllysine; alternate). Catalysis depends on residues histidine 452 and aspartate 456.

Belongs to the 2-oxoacid dehydrogenase family. Forms a 24-polypeptide structural core with octahedral symmetry that represents the E2 component of the branched-chain alpha-ketoacid dehydrogenase (BCKDH) complex. The BCKDH complex is composed of three major building blocks E1, E2 and E3. It is organized around E2, a 24-meric cubic core composed of DBT, to which are associated 6 to 12 copies of E1, and approximately 6 copies of the dehydrogenase E3, a DLD dimer. Interacts with PPM1K with a 24:1 stoichiometry; the N-terminal region (residues 49-61) of PPM1K and C-terminal linker of the lipoyl domain of DBT/E2 (residues 145-160) are critical for this interaction whereas the lipoyl prosthetic group is dispensable. This interaction requires colocalization in mitochondria. PPM1K competes with BCKDK for binding to DBT; this interaction is modulated by branched-chain alpha-keto acids (BCKAs). At steady state, BCKDH holoenzyme preferentially binds BCKDK and BCKDHA is phosphorylated. In response to high levels of BCKAs, BCKDK is replaced by PPM1K leading to BCKDHA dephosphorylation. Requires (R)-lipoate as cofactor.

Its subcellular location is the mitochondrion matrix. It catalyses the reaction N(6)-[(R)-dihydrolipoyl]-L-lysyl-[protein] + 2-methylpropanoyl-CoA = N(6)-[(R)-S(8)-2-methylpropanoyldihydrolipoyl]-L-lysyl-[protein] + CoA. Functionally, the branched-chain alpha-keto dehydrogenase complex catalyzes the overall conversion of alpha-keto acids to acyl-CoA and CO(2). It contains multiple copies of three enzymatic components: branched-chain alpha-keto acid decarboxylase (E1), lipoamide acyltransferase (E2) and lipoamide dehydrogenase (E3). Within this complex, the catalytic function of this enzyme is to accept, and to transfer to coenzyme A, acyl groups that are generated by the branched-chain alpha-keto acid decarboxylase component. This chain is Lipoamide acyltransferase component of branched-chain alpha-keto acid dehydrogenase complex, mitochondrial (Dbt), found in Mus musculus (Mouse).